The primary structure comprises 1362 residues: Insulin receptor (1362 aa).

Positions Met-1 to Cys-37 are cleaved as a signal peptide. The tract at residues Asp-38–Leu-184 is leucine-rich region. Cysteines 45 and 63 form a disulfide. Asn-53, Asn-115, and Asn-148 each carry an N-linked (GlcNAc...) asparagine glycan. 14 disulfide bridges follow: Cys-163-Cys-192, Cys-196-Cys-219, Cys-206-Cys-225, Cys-229-Cys-238, Cys-233-Cys-244, Cys-245-Cys-253, Cys-249-Cys-262, Cys-265-Cys-274, Cys-278-Cys-290, Cys-296-Cys-321, Cys-303-Cys-311, Cys-325-Cys-338, Cys-341-Cys-345, and Cys-349-Cys-370. Asn-332 carries N-linked (GlcNAc...) asparagine glycosylation. 3 N-linked (GlcNAc...) asparagine glycosylation sites follow: Asn-374, Asn-434, and Asn-455. Cys-472 and Cys-505 are disulfide-bonded. Fibronectin type-III domains lie at Asn-508 to Thr-629 and Val-633 to Glu-730. 5 N-linked (GlcNAc...) asparagine glycosylation sites follow: Asn-551, Asn-627, Asn-642, Asn-660, and Asn-707. Intrachain disulfides connect Cys-683–Cys-896 and Cys-822–Cys-830. The segment at Trp-694–Val-714 is disordered. A compositionally biased stretch (polar residues) spans Asn-705–Val-714. The tract at residues Glu-741–Phe-749 is insulin-binding. The Extracellular segment spans residues Asp-759–Lys-951. Residues Asn-765 and Asn-779 are each glycosylated (N-linked (GlcNAc...) asparagine). A Fibronectin type-III 3 domain is found at Val-849–His-944. N-linked (GlcNAc...) asparagine glycosylation is found at Asn-917 and Asn-930. Residues Ile-952 to Val-972 traverse the membrane as a helical segment. Over Gln-973–Ser-1362 the chain is Cytoplasmic. Tyr-993 carries the phosphotyrosine; by autocatalysis modification. Residues Ile-1012–Phe-1287 form the Protein kinase domain. ATP-binding positions include Ser-1022, Lys-1046, and Glu-1093 to Asp-1099. Asp-1148 functions as the Proton donor/acceptor in the catalytic mechanism. ATP-binding positions include Arg-1152 to Asn-1153 and Asp-1166. A phosphotyrosine; by autocatalysis mark is found at Tyr-1174, Tyr-1178, Tyr-1179, Tyr-1335, and Tyr-1341.

The protein belongs to the protein kinase superfamily. Tyr protein kinase family. Insulin receptor subfamily. As to quaternary structure, tetramer of 2 alpha and 2 beta chains linked by disulfide bonds. The alpha chains contribute to the formation of the ligand-binding domain, while the beta chains carry the kinase domain. Post-translationally, autophosphorylated on tyrosine residues in response to insulin. In terms of tissue distribution, localized mainly to the envelope in oocytes. Localized to the animal hemisphere during early embryonic cleavage. Expressed during organogenesis in regions of ecto- and mesodermic origins. Expressed in the entire encephalon, the otic and optic vesicles, the gills, the somites and the pronephric tubules of the embryo. Also found in adult liver, muscle and regenerated forelimbs.

The protein localises to the cell membrane. The enzyme catalyses L-tyrosyl-[protein] + ATP = O-phospho-L-tyrosyl-[protein] + ADP + H(+). Its activity is regulated as follows. Autophosphorylation activates the kinase activity. Receptor tyrosine kinase which mediates actions of insulin. May be required for forelimb regeneration. This is Insulin receptor (insr) from Xenopus laevis (African clawed frog).